The following is a 131-amino-acid chain: D-ribose pyranase (131 aa).

The active-site Proton donor is the histidine 20. Residues aspartate 28, histidine 98, and 120–122 (YSN) contribute to the substrate site.

Belongs to the RbsD / FucU family. RbsD subfamily. As to quaternary structure, homodecamer.

It is found in the cytoplasm. It catalyses the reaction beta-D-ribopyranose = beta-D-ribofuranose. It functions in the pathway carbohydrate metabolism; D-ribose degradation; D-ribose 5-phosphate from beta-D-ribopyranose: step 1/2. Catalyzes the interconversion of beta-pyran and beta-furan forms of D-ribose. This is D-ribose pyranase from Limosilactobacillus fermentum (strain NBRC 3956 / LMG 18251) (Lactobacillus fermentum).